A 259-amino-acid polypeptide reads, in one-letter code: Phospholipase YtpA (259 aa).

Ser88 serves as the catalytic Nucleophile. Residues Asp206 and His236 each act as charge relay system in the active site.

It belongs to the AB hydrolase superfamily.

It participates in antibiotic biosynthesis; bacilysocin biosynthesis. Functionally, phospholipase involved in the biosynthesis of the antibiotic bacilysocin. It probably catalyzes the hydrolysis of the 2-sn-acyl moiety of phosphatidylglycerol to produce bacilysocin (lysophosphatidylglycerol). Is also able to catalyze the hydrolysis reaction of one acyl bond in phosphatidylcholine in vitro (actual cleavage point is unknown), resulting in lysophosphatidylcholine. This chain is Phospholipase YtpA (ytpA), found in Bacillus subtilis (strain 168).